A 284-amino-acid polypeptide reads, in one-letter code: 4-diphosphocytidyl-2-C-methyl-D-erythritol kinase (284 aa).

The active site involves Lys-14. 98–108 provides a ligand contact to ATP; it reads PMGGGLGGGSS. Asp-140 is an active-site residue.

The protein belongs to the GHMP kinase family. IspE subfamily.

It carries out the reaction 4-CDP-2-C-methyl-D-erythritol + ATP = 4-CDP-2-C-methyl-D-erythritol 2-phosphate + ADP + H(+). Its pathway is isoprenoid biosynthesis; isopentenyl diphosphate biosynthesis via DXP pathway; isopentenyl diphosphate from 1-deoxy-D-xylulose 5-phosphate: step 3/6. Its function is as follows. Catalyzes the phosphorylation of the position 2 hydroxy group of 4-diphosphocytidyl-2C-methyl-D-erythritol. The protein is 4-diphosphocytidyl-2-C-methyl-D-erythritol kinase of Shewanella sp. (strain ANA-3).